Reading from the N-terminus, the 223-residue chain is ATP synthase subunit a 2 (223 aa).

A run of 5 helical transmembrane segments spans residues 17–37 (VAITRPVVTTWVIMAALALVC), 77–97 (FLPLLGTLIIFLVVANLSGVL), 106–126 (KIETPAALALIVFFSVHYFGV), 173–193 (FIIGLVVALAGLFVPIPLMAL), and 195–215 (ILVGLVQAYIFTVLATVFIGA).

This sequence belongs to the ATPase A chain family. As to quaternary structure, F-type ATPases have 2 components, CF(1) - the catalytic core - and CF(0) - the membrane proton channel. CF(1) has five subunits: alpha(3), beta(3), gamma(1), delta(1), epsilon(1). CF(0) has four main subunits: a, b, b' and c.

The protein localises to the cell inner membrane. In terms of biological role, key component of the proton channel; it plays a direct role in the translocation of protons across the membrane. The chain is ATP synthase subunit a 2 from Bradyrhizobium sp. (strain BTAi1 / ATCC BAA-1182).